Here is a 144-residue protein sequence, read N- to C-terminus: Large ribosomal subunit protein uL15 (144 aa).

The segment at 1 to 53 (MRLNTLSPAEGAKHAPKRLGRGIGSGLGKTGGRGHKGQNSRSGGGVRRGFEGG) is disordered. Positions 21 to 31 (RGIGSGLGKTG) are enriched in gly residues.

Belongs to the universal ribosomal protein uL15 family. Part of the 50S ribosomal subunit.

Functionally, binds to the 23S rRNA. In Pectobacterium atrosepticum (strain SCRI 1043 / ATCC BAA-672) (Erwinia carotovora subsp. atroseptica), this protein is Large ribosomal subunit protein uL15.